We begin with the raw amino-acid sequence, 163 residues long: Neurotrophin-3 (163 aa).

The first 3 residues, 1–3 (IQS), serve as a signal peptide directing secretion. Positions 4-119 (TSMDQGILTE…VLNRTSRRKR (116 aa)) are excised as a propeptide. A glycan (N-linked (GlcNAc...) asparagine) is linked at Asn112.

The protein belongs to the NGF-beta family.

The protein localises to the secreted. Functionally, seems to promote the survival of visceral and proprioceptive sensory neurons. The protein is Neurotrophin-3 (NTF3) of Eryx colubrinus colubrinus.